Reading from the N-terminus, the 583-residue chain is Proteasome-associated ATPase (583 aa).

Residues 1 to 19 (METPNQDSGRTPTEQSAAN) show a composition bias toward polar residues. A disordered region spans residues 1–22 (METPNQDSGRTPTEQSAANDLS). Positions 24 to 75 (ADRQVNILRDKLRHIDRQLAAATQNNTKLVSMLETAKAEILRLKNALDQEGQ) form a coiled coil. 271 to 276 (GCGKTL) is an ATP binding site. Residues 582–583 (YL) are docks into pockets in the proteasome alpha-ring.

This sequence belongs to the AAA ATPase family. Homohexamer. Assembles into a hexameric ring structure that caps the 20S proteasome core. Strongly interacts with the prokaryotic ubiquitin-like protein Pup through a hydrophobic interface; the interacting region of ARC lies in its N-terminal coiled-coil domain. There is one Pup binding site per ARC hexamer ring. Upon ATP-binding, the C-terminus of ARC interacts with the alpha-rings of the proteasome core, possibly by binding to the intersubunit pockets.

It participates in protein degradation; proteasomal Pup-dependent pathway. Functionally, ATPase which is responsible for recognizing, binding, unfolding and translocation of pupylated proteins into the bacterial 20S proteasome core particle. May be essential for opening the gate of the 20S proteasome via an interaction with its C-terminus, thereby allowing substrate entry and access to the site of proteolysis. Thus, the C-termini of the proteasomal ATPase may function like a 'key in a lock' to induce gate opening and therefore regulate proteolysis. The polypeptide is Proteasome-associated ATPase (Pseudarthrobacter chlorophenolicus (strain ATCC 700700 / DSM 12829 / CIP 107037 / JCM 12360 / KCTC 9906 / NCIMB 13794 / A6) (Arthrobacter chlorophenolicus)).